Here is a 4423-residue protein sequence, read N- to C-terminus: Nonribosomal peptide synthetase 7 (4423 aa).

The tract at residues 572-986 (NIYPCTSIQE…LISQDDKNRI (415 aa)) is condensation 1. The adenylation 1 stretch occupies residues 1007-1404 (ERIQKQPSAV…GRRDTQVKIR (398 aa)). In terms of domain architecture, Carrier 1 spans 1533–1609 (LPLTETEQKL…DLARTIDERN (77 aa)). Ser-1570 is modified (O-(pantetheine 4'-phosphoryl)serine). Residues 1657-2066 (EDVYPCTSLQ…QFLDETHHET (410 aa)) form a condensation 2 region. The interval 2102 to 2499 (RDVAKEQPDS…YIGRMGSEVK (398 aa)) is adenylation 2. The Carrier 2 domain maps to 2642–2718 (VPQTRIGKKL…DCARILEADQ (77 aa)). An O-(pantetheine 4'-phosphoryl)serine modification is found at Ser-2679. A condensation 3 region spans residues 2764–3170 (EDVYPCTPMQ…AASASSDDQT (407 aa)). Residues 3205 to 3609 (RSLETRPDSQ…GRGDSQIKIR (405 aa)) are adenylation 3. The Carrier 3 domain maps to 3731 to 3804 (TESEYITRTL…KMAVVAQHQT (74 aa)). Ser-3765 carries the O-(pantetheine 4'-phosphoryl)serine modification. Residues 3875–4278 (TFVLDAEGDL…SQDEKLALLG (404 aa)) form a condensation 4 region. Residues 4288 to 4300 (KLTKLQRVNSPKE) show a composition bias toward polar residues. Residues 4288 to 4312 (KLTKLQRVNSPKEQTLRKDKPTNGV) are disordered.

It belongs to the NRP synthetase family.

The protein operates within secondary metabolite biosynthesis. Nonribosomal peptide synthetase; part of the gene cluster that mediates the biosynthesis of the lipopeptide fusaristatin A. Fusaristatin A consists of a polyketide chain linked to three amino acid residues glutamine (Gln), dehydroalanine (dehydro-Ala), and beta-aminoisobutyric acid. The biosynthesis starts with formation of a linear polyketide chain by the highly reducing polyketide synthase PKS6. The gene cluster does not contain an acyl-CoA ligase or an acyl-transferase, and it is therefore predicted that the polyketide is transferred directly to the nonribosomal peptide synthetase NRPS7. Modules 1-3 from NRPS7 incorporate dehydro-Ala, Gln, and beta-aminoisobutyric acid in the compound, which is released by cyclization. The beta-aminoisobutyric acid units are most likely not freely available to the NRPS, but can be synthesized from thymine, which requires a dehydrogenase, a monooxygenase, and an aminotransferase. The fusaristatin A cluster contains a cytochrome P450 monooxygenase (FGSG_08207) and an aminotransferase (FGSG_17085), which theoretically can perform two of the enzymatic steps. The enzymes may however also be involved in biosynthesis of dehydroalanine or modification of the polyketide. The dehydro-Ala residue can be a result of cyclization, where serine is dehydrated. The last gene of the cluster encodes a protein with an A/B barrel domain found in variable enzymes, which hampers functional prediction. The polypeptide is Nonribosomal peptide synthetase 7 (Gibberella zeae (strain ATCC MYA-4620 / CBS 123657 / FGSC 9075 / NRRL 31084 / PH-1) (Wheat head blight fungus)).